Reading from the N-terminus, the 263-residue chain is Bradykinin-potentiating and C-type natriuretic peptides (263 aa).

Residues 1–23 (MFVSRLAASGLLLLALMALSLDG) form the signal peptide. A propeptide spanning residues 24-30 (KPVQQWS) is cleaved from the precursor. Gln31 carries the pyrrolidone carboxylic acid modification. The propeptide occupies 42 to 48 (LVVQQWS). Pyrrolidone carboxylic acid is present on Gln49. A propeptide spanning residues 60–66 (LVVQQWS) is cleaved from the precursor. Gln67 is subject to Pyrrolidone carboxylic acid. Residues 78 to 84 (LVVQQWS) constitute a propeptide that is removed on maturation. Gln85 carries the post-translational modification Pyrrolidone carboxylic acid. The tract at residues 89 to 95 (PRPKIPP) is angiotensin-converting enzyme active site binding. A propeptide spanning residues 96–102 (LVVQQWS) is cleaved from the precursor. Gln103 carries the post-translational modification Pyrrolidone carboxylic acid. The tract at residues 107-113 (PRPKIPP) is angiotensin-converting enzyme active site binding. Positions 114-116 (LVV) are excised as a propeptide. Gln117 carries the post-translational modification Pyrrolidone carboxylic acid. Residues 128-130 (LLL) constitute a propeptide that is removed on maturation. Gln131 is subject to Pyrrolidone carboxylic acid. A propeptide spanning residues 137–241 (AGGTTALREE…ARRLKGLVKK (105 aa)) is cleaved from the precursor. Disordered stretches follow at residues 152–171 (EAAS…GSKA) and 177–205 (RLSK…GKQA). Residues 181 to 192 (SKGASATSASAS) show a composition bias toward low complexity. Residues 194-204 (PMRDLRTDGKQ) are compositionally biased toward basic and acidic residues. Cys247 and Cys263 form a disulfide bridge.

This sequence in the N-terminal section; belongs to the bradykinin-potentiating peptide family. In the C-terminal section; belongs to the natriuretic peptide family. Expressed by the venom gland.

The protein localises to the secreted. In terms of biological role, inhibits the rabbit lung angiotensin-converting enzyme (ACE) (IC(50)=15 uM). Contracts the rat gastric fundus smooth muscle in a rapid and transient manner. Causes no contraction of the rat gastric fundus smooth muscle even at high concentrations. Causes very weak contraction of the isolated guinea pig ileum. Causes weak contraction on rat uterus. Functionally, inhibits the activity of the angiotensin-converting enzyme (ACE) by a preferential interaction with its C-domain (Ki=30 nM, IC(50)=1.1 uM). It binds ACE in a zinc-independent manner. Also potentiates the hypotensive effects of bradykinin. Causes high contraction of the isolated guinea pig ileum and weak contraction on rat uterus. Its function is as follows. Inhibits the activity of the angiotensin-converting enzyme (ACE) by interacting with the same potency to its C- and N-domains. Inhibits the rabbit lung angiotensin-converting enzyme (ACE) (IC(50)=7.1 uM). Causes weak contraction of the isolated guinea pig ileum. Causes weak contraction on rat uterus. In terms of biological role, inhibits the rabbit lung angiotensin-converting enzyme (ACE) (IC(50)=46 uM). Synthetic Leu3-blomhotin contracts the rat gastric fundus smooth muscle in a rapid and transient manner. Causes moderate contraction of the isolated guinea pig ileum. Causes weak contraction on rat uterus. Causes weak contraction of the isolated guinea pig ileum. Causes about 50-fold more potentiating activity on rat uterus than on guinea pig ileum. Functionally, synthetic peptide potentiates the bradykinin in vivo. Its function is as follows. Synthetic peptide does not show any bradykinin-potentiating effects. In terms of biological role, has a vasorelaxant activity in rat aortic strips and a diuretic potency in anesthetized rats. May act by activating natriuretic receptors (NPR1 and/or NPR2). The polypeptide is Bradykinin-potentiating and C-type natriuretic peptides (Gloydius blomhoffii (Mamushi)).